The chain runs to 133 residues: Small ribosomal subunit protein bS18 (133 aa).

The tract at residues 1–63 (MARPDMGGPK…GDEGGGRRGF (63 aa)) is disordered. Residues 9 to 39 (PKTGGFGGPRSGGFGGGGGGGFGGGGFGGGR) are compositionally biased toward gly residues. A compositionally biased stretch (basic and acidic residues) spans 40 to 59 (GGDRGDRGDRDDRGGDEGGG).

The protein belongs to the bacterial ribosomal protein bS18 family. In terms of assembly, part of the 30S ribosomal subunit. Forms a tight heterodimer with protein bS6.

Its function is as follows. Binds as a heterodimer with protein bS6 to the central domain of the 16S rRNA, where it helps stabilize the platform of the 30S subunit. The chain is Small ribosomal subunit protein bS18 from Anaeromyxobacter dehalogenans (strain 2CP-1 / ATCC BAA-258).